We begin with the raw amino-acid sequence, 295 residues long: MEKLQFQGGDRAVDEYAEYRRIVGDDDGGKLFTPEEYEQYKKTVLPMRLQNRLYVSWRSPCGMDCKLVGPETACFCTHRYKQHKTDFKELPKERPVLLPCKVSKCPCKSFHYIPLNGSRPIRCRCKHFADEHSLAGTYHCTKCTKCSGFHSSFTCGCGQPAYAHDTIVETKEERLAQGKPVGHDVPYASMGGLTGFSSLAEGYMRLDASGTGAPGASFLESSQSGASHPFLKMYDMPCTVQGVSEPPGIDKQVSSMRLSEEDDMAYFERRYQERLRKEKEHKRQKNSKPPTTQRP.

The interval 244–295 (SEPPGIDKQVSSMRLSEEDDMAYFERRYQERLRKEKEHKRQKNSKPPTTQRP) is disordered. Residues 266-278 (YFERRYQERLRKE) show a composition bias toward basic and acidic residues.

This sequence belongs to the FAM221 family.

This chain is Protein FAM221A (fam221a), found in Xenopus laevis (African clawed frog).